A 196-amino-acid chain; its full sequence is Inosine triphosphate pyrophosphatase 2 (196 aa).

Residue 20 to 25 (TGNDGK) coordinates ITP. Glu-48 provides a ligand contact to Mg(2+). Residues Lys-61, 77–78 (DT), Lys-94, 153–156 (FGWD), Lys-177, and 182–183 (PR) contribute to the ITP site.

The protein belongs to the HAM1 NTPase family. As to quaternary structure, homodimer. The cofactor is Mg(2+). Mn(2+) serves as cofactor.

It is found in the cytoplasm. The catalysed reaction is ITP + H2O = IMP + diphosphate + H(+). It carries out the reaction dITP + H2O = dIMP + diphosphate + H(+). The enzyme catalyses XTP + H2O = XMP + diphosphate + H(+). Its function is as follows. Pyrophosphatase that hydrolyzes non-canonical purine nucleotides such as inosine triphosphate (ITP), deoxyinosine triphosphate (dITP) or xanthosine 5'-triphosphate (XTP) to their respective monophosphate derivatives. The enzyme does not distinguish between the deoxy- and ribose forms. Probably excludes non-canonical purines from RNA and DNA precursor pools, thus preventing their incorporation into RNA and DNA and avoiding chromosomal lesions. The sequence is that of Inosine triphosphate pyrophosphatase 2 from Trypanosoma cruzi (strain CL Brener).